The primary structure comprises 227 residues: uncharacterized protein (227 aa).

To ORF5 in pFZ1.

This is an uncharacterized protein from Methanothermobacter thermautotrophicus (Methanobacterium thermoformicicum).